Here is a 434-residue protein sequence, read N- to C-terminus: Protein maelstrom homolog (434 aa).

The segment at residues 4–73 is a DNA-binding region (HMG box); it reads RRASRNAYYF…AQGKDSGPSE (70 aa).

Belongs to the maelstrom family. Interacts with SMARCB1, SIN3B and DDX4. Interacts with piRNA-associated proteins TDRD1, PIWIL1 and PIWIL2. Interacts with Tex19.1 and, probably, Tex19.2. In terms of tissue distribution, testis-specific. Present in spermatocytes and round and early elongating spermatids.

It is found in the cytoplasm. Its subcellular location is the nucleus. Plays a central role during spermatogenesis by repressing transposable elements and preventing their mobilization, which is essential for the germline integrity. Acts via the piRNA metabolic process, which mediates the repression of transposable elements during meiosis by forming complexes composed of piRNAs and Piwi proteins and governs the methylation and subsequent repression of transposons. Its association with piP-bodies suggests a participation in the secondary piRNAs metabolic process. Required for the localization of germ-cell factors to the meiotic nuage. The polypeptide is Protein maelstrom homolog (Mus musculus (Mouse)).